Consider the following 202-residue polypeptide: NADH-quinone oxidoreductase subunit B (202 aa).

Cys-81, Cys-82, Cys-146, and Cys-176 together coordinate [4Fe-4S] cluster.

It belongs to the complex I 20 kDa subunit family. As to quaternary structure, NDH-1 is composed of 14 different subunits. Subunits NuoB, C, D, E, F, and G constitute the peripheral sector of the complex. Requires [4Fe-4S] cluster as cofactor.

The protein resides in the cell inner membrane. It carries out the reaction a quinone + NADH + 5 H(+)(in) = a quinol + NAD(+) + 4 H(+)(out). NDH-1 shuttles electrons from NADH, via FMN and iron-sulfur (Fe-S) centers, to quinones in the respiratory chain. The immediate electron acceptor for the enzyme in this species is believed to be ubiquinone. Couples the redox reaction to proton translocation (for every two electrons transferred, four hydrogen ions are translocated across the cytoplasmic membrane), and thus conserves the redox energy in a proton gradient. The polypeptide is NADH-quinone oxidoreductase subunit B (Bradyrhizobium diazoefficiens (strain JCM 10833 / BCRC 13528 / IAM 13628 / NBRC 14792 / USDA 110)).